The chain runs to 420 residues: Exodeoxyribonuclease 7 large subunit (420 aa).

It belongs to the XseA family. In terms of assembly, heterooligomer composed of large and small subunits.

It localises to the cytoplasm. The enzyme catalyses Exonucleolytic cleavage in either 5'- to 3'- or 3'- to 5'-direction to yield nucleoside 5'-phosphates.. Bidirectionally degrades single-stranded DNA into large acid-insoluble oligonucleotides, which are then degraded further into small acid-soluble oligonucleotides. In Helicobacter acinonychis (strain Sheeba), this protein is Exodeoxyribonuclease 7 large subunit.